The following is a 187-amino-acid chain: Elongation factor P (187 aa).

It belongs to the elongation factor P family.

Its subcellular location is the cytoplasm. It participates in protein biosynthesis; polypeptide chain elongation. Its function is as follows. Involved in peptide bond synthesis. Stimulates efficient translation and peptide-bond synthesis on native or reconstituted 70S ribosomes in vitro. Probably functions indirectly by altering the affinity of the ribosome for aminoacyl-tRNA, thus increasing their reactivity as acceptors for peptidyl transferase. The chain is Elongation factor P from Ruegeria sp. (strain TM1040) (Silicibacter sp.).